The sequence spans 206 residues: Protein DEHYDRATION-INDUCED 19 (206 aa).

Position 105 is a phosphothreonine (Thr-105). At Ser-107 the chain carries Phosphoserine. The interval 142-167 (SSFISPTRSQSSPAPRQTKNVSEDKQ) is disordered. A compositionally biased stretch (polar residues) spans 143–161 (SFISPTRSQSSPAPRQTKN).

The protein belongs to the Di19 family. Interacts with ADO2/LKP2, CPK11 and CPK4. Weak interaction with CPK12 and no interactions with CPK1, CPK5 or CPK26. Phosphorylated within the NLS/NES region. As to expression, expressed in seedlings, roots, leaves, stems, flowers and siliques.

It is found in the nucleus. This is Protein DEHYDRATION-INDUCED 19 (DI19-1) from Arabidopsis thaliana (Mouse-ear cress).